We begin with the raw amino-acid sequence, 390 residues long: MLGLKGCLTILIGYVIAVCALFSSRGRNPSLTDWEKLKDQKISNIDNFGLTGQHLLEFFQENLPFLSFSEEKYRHKHVSLYYDVFKEYILRRASSKKCLPVDSAIAKLNKDVNPMPVHSHNDYWRKLPLFEGLAYGASSTEADVWNIDEKILAVGHNEAYLDPVELTLDKLYTGPLLEILDEVNCQDSDSDRKNGVFFNSPETSLFFYIDFKSDDNELTYKLLMEQYFKSLIDSGYLTYYDMKKDEIIWRPVTVILTGNYPTSLDILDNGNDNGYFESNQRFAFLDAPLLSLEPKYSKLSVAATVSFSQLMKHCGSDHWKVSLRGRMDSNEISCAKSIIDGAHALKLKTRIWGAPTWPANLVETISRQIIHDLGSDLLNLDNLFMASSLI.

The first 26 residues, 1–26 (MLGLKGCLTILIGYVIAVCALFSSRG), serve as a signal peptide directing secretion.

The protein belongs to the AIM6 family.

The chain is Altered inheritance of mitochondria protein 6 (AIM6) from Saccharomyces cerevisiae (strain YJM789) (Baker's yeast).